Consider the following 408-residue polypeptide: Putative ankyrin repeat protein L483 (408 aa).

ANK repeat units follow at residues 78-107 (SLNK…DIKA), 108-137 (GDDC…NIRA), 139-167 (NDYA…DIRA), 168-197 (NNDY…NIRT), 198-227 (ENDY…DIRA), 229-257 (NDYA…NIRV), 259-287 (NDYA…NIRA), 288-317 (RCDF…DIRS), 318-347 (QNDY…DIRT), 349-377 (DDYA…NIRA), and 378-407 (KDDY…VLTK).

The chain is Putative ankyrin repeat protein L483 from Acanthamoeba polyphaga (Amoeba).